Reading from the N-terminus, the 289-residue chain is HTH-type transcriptional regulator CatR (289 aa).

The HTH lysR-type domain occupies 1-57 (MELRHLRYFKVLAETLNFTRAAELLHIAQPPLSRQISQLEDQLGTLLVVRERPLRLT). The segment at residues 18–37 (FTRAAELLHIAQPPLSRQIS) is a DNA-binding region (H-T-H motif).

This sequence belongs to the LysR transcriptional regulatory family.

The protein resides in the cytoplasm. Positive regulator of the catBC operon that degrades catechol to acetyl-CoA. CatR binds in trans to the catR-catBC promoter-control region in the presence or absence of inducer but only activates the catBC operon in the presence of the inducer, cis-cis-muconate. The chain is HTH-type transcriptional regulator CatR (catR) from Pseudomonas putida (Arthrobacter siderocapsulatus).